The following is a 562-amino-acid chain: Protein wntless (562 aa).

Topologically, residues 1-13 (MSGTILENLSGRK) are cytoplasmic. Residues 14–34 (LSILVASLLLCQVFCFLLGGL) traverse the membrane as a helical segment. Residues 35–239 (YAPLPAGHVT…AIHQNGGFTQ (205 aa)) lie on the Lumenal side of the membrane. Asn-58 carries N-linked (GlcNAc...) asparagine glycosylation. Residues 240–260 (IWLMLKTVLFPFVVGIMIWFW) form a helical membrane-spanning segment. The Cytoplasmic portion of the chain corresponds to 261 to 270 (RRVHLLQRSP). The chain crosses the membrane as a helical span at residues 271–291 (ALLEYMLIYLGGALTFLNLPL). The Lumenal segment spans residues 292 to 311 (EYLSLVVEMPYMLLLSDIRQ). Residues 312 to 332 (GIFYAMLLSFWLVFAGEHMLI) traverse the membrane as a helical segment. The Cytoplasmic segment spans residues 333–344 (QDAPNKSTIRSR). Residues 345 to 365 (YWKHLSAVVVGCISLFVFDIC) form a helical membrane-spanning segment. Residues 366-390 (ERGVQLRNPFYSIWTTPLGAKVAMT) are Lumenal-facing. Residues 391–411 (FIILAGVSAAIYFLFLCYMIW) traverse the membrane as a helical segment. Topologically, residues 412 to 441 (KVFRNIGDKRTSLPSMSQARRLHYEGLIYR) are cytoplasmic. A helical transmembrane segment spans residues 442 to 462 (FKFLMLATLLCAALTVAGFIM). Residues 463 to 482 (GQMAEGQWQWNDNVEIQLTS) are Lumenal-facing. The helical transmembrane segment at 483–503 (AFLTGVYGMWNIYIFALLILY) threads the bilayer. Topologically, residues 504 to 562 (APSHKQWPTMHHSDETTQSNENIVASAASEEIEFSHLPSDSNPSEISSLTSFTRKVAFD) are cytoplasmic. Residues 539–562 (HLPSDSNPSEISSLTSFTRKVAFD) are disordered. The span at 541–556 (PSDSNPSEISSLTSFT) shows a compositional bias: polar residues.

It belongs to the wntless family. As to quaternary structure, interacts with wg; in the Golgi. Interacts with Vps35, a component of the retromer complex; wls stability is regulated by Vps35.

Its subcellular location is the presynaptic cell membrane. It is found in the postsynaptic cell membrane. It localises to the cell membrane. The protein resides in the endoplasmic reticulum membrane. The protein localises to the endosome membrane. Its subcellular location is the golgi apparatus membrane. Its function is as follows. A segment polarity gene required for wingless (wg)-dependent patterning processes, acting in both wg-sending cells and wg-target cells. In non-neuronal cells wls directs wg secretion. The wls traffic loop encompasses the Golgi, the cell surface, an endocytic compartment and a retrograde route leading back to the Golgi, and involves clathrin-mediated endocytosis and the retromer complex (a conserved protein complex consisting of Vps35 and Vps26). In neuronal cells (the larval motorneuron NMJ), the wg signal moves across the synapse via the release of wls-containing exosome-like vesicles. Postsynaptic wls is required for the trafficking of fz2 through the fz2-interacting protein Grip. The chain is Protein wntless from Drosophila ananassae (Fruit fly).